The sequence spans 914 residues: MGDSRDLCPHLDSIGEVTKEDLLLKSKGTCQSCGVTGPNLWACLQVACPYVGCGESFADHSTIHAQAKKHNLTVNLTTFRLWCYACEKEVFLEQRLAAPLLGSSSKFSEQDSPPPSHPLKAVPIAVADEGESESEDDDLKPRGLTGMKNLGNSCYMNAALQALSNCPPLTQFFLECGGLVRTDKKPALCKSYQKLVSEVWHKKRPSYVVPTSLSHGIKLVNPMFRGYAQQDTQEFLRCLMDQLHEELKEPVVATVALTEARDSDSSDTDEKREGDRSPSEDEFLSCDSSSDRGEGDGQGRGGGSSQAETELLIPDEAGRAISEKERMKDRKFSWGQQRTNSEQVDEDADVDTAMAALDDQPAEAQPPSPRSSSPCRTPEPDNDAHLRSSSRPCSPVHHHEGHAKLSSSPPRASPVRMAPSYVLKKAQVLSAGSRRRKEQRYRSVISDIFDGSILSLVQCLTCDRVSTTVETFQDLSLPIPGKEDLAKLHSAIYQNVPAKPGACGDSYAAQGWLAFIVEYIRRFVVSCTPSWFWGPVVTLEDCLAAFFAADELKGDNMYSCERCKKLRNGVKYCKVLRLPEILCIHLKRFRHEVMYSFKINSHVSFPLEGLDLRPFLAKECTSQITTYDLLSVICHHGTAGSGHYIAYCQNVINGQWYEFDDQYVTEVHETVVQNAEGYVLFYRKSSEEAMRERQQVVSLAAMREPSLLRFYVSREWLNKFNTFAEPGPITNQTFLCSHGGIPPHKYHYIDDLVVILPQNVWEHLYNRFGGGPAVNHLYVCSICQVEIEALAKRRRIEIDTFIKLNKAFQAEESPGVIYCISMQWFREWEAFVKGKDNEPPGPIDNSRIAQVKGSGHVQLKQGADYGQISEETWTYLNSLYGGGPEIAIRQSVAQPLGPENLHGEQKIEAETRAV.

The segment at 6 to 111 (DLCPHLDSIG…GSSSKFSEQD (106 aa)) adopts a UBP-type zinc-finger fold. The Zn(2+) site is built by Cys-8, His-10, Cys-30, Cys-33, Cys-43, Cys-48, Cys-53, His-60, His-64, His-70, Cys-83, and Cys-86. 3 positions are modified to phosphoserine: Ser-112, Ser-132, and Ser-134. In terms of domain architecture, USP spans 145-685 (TGMKNLGNSC…EGYVLFYRKS (541 aa)). Catalysis depends on Cys-154, which acts as the Nucleophile. 2 disordered regions span residues 257–347 (LTEA…VDED) and 360–415 (QPAE…ASPV). Thr-258 is modified (phosphothreonine). The span at 259-279 (EARDSDSSDTDEKREGDRSPS) shows a compositional bias: basic and acidic residues. Residue Ser-305 is modified to Phosphoserine. The segment covering 316-332 (EAGRAISEKERMKDRKF) has biased composition (basic and acidic residues). Ser-368 carries the phosphoserine modification. Phosphothreonine is present on Thr-377. Ser-408 and Ser-413 each carry phosphoserine. His-643 acts as the Proton acceptor in catalysis. DUSP domains follow at residues 687–780 (EEAM…LYVC) and 789–892 (ALAK…RQSV).

Belongs to the peptidase C19 family. USP20/USP33 subfamily. Interacts with VHL, leading to its ubiquitination and subsequent degradation. Interacts with CCP110. Interacts with DIO2. Interacts with HIF1A. Interacts with ADRB2. Interacts with USP18. Ubiquitinated via a VHL-dependent pathway for proteasomal degradation.

The protein localises to the cytoplasm. It localises to the endoplasmic reticulum. It is found in the perinuclear region. The protein resides in the cytoskeleton. Its subcellular location is the microtubule organizing center. The protein localises to the centrosome. The catalysed reaction is Thiol-dependent hydrolysis of ester, thioester, amide, peptide and isopeptide bonds formed by the C-terminal Gly of ubiquitin (a 76-residue protein attached to proteins as an intracellular targeting signal).. Deubiquitinating enzyme that plays a role in many cellular processes including autophagy, cellular antiviral response or membrane protein biogenesis. Attenuates TLR4-mediated NF-kappa-B signaling by cooperating with beta-arrestin-2/ARRB2 and inhibiting TRAF6 autoubiquitination. Promotes cellular antiviral responses by deconjugating 'Lys-33' and 'Lys-48'-linked ubiquitination of STING1 leading to its stabilization. Plays an essential role in autophagy induction by regulating the ULK1 stability through deubiquitination of ULK1. Acts as a positive regulator for NF-kappa-B activation by TNF-alpha through deubiquitinating 'Lys-48'-linked polyubiquitination of SQSTM1, leading to its increased stability. Acts as a regulator of G-protein coupled receptor (GPCR) signaling by mediating the deubiquitination beta-2 adrenergic receptor (ADRB2). Plays a central role in ADRB2 recycling and resensitization after prolonged agonist stimulation by constitutively binding ADRB2, mediating deubiquitination of ADRB2 and inhibiting lysosomal trafficking of ADRB2. Upon dissociation, it is probably transferred to the translocated beta-arrestins, possibly leading to beta-arrestins deubiquitination and disengagement from ADRB2. This suggests the existence of a dynamic exchange between the ADRB2 and beta-arrestins. Deubiquitinates DIO2, thereby regulating thyroid hormone regulation. Deubiquitinates HIF1A, leading to stabilize HIF1A and enhance HIF1A-mediated activity. Deubiquitinates MCL1, a pivotal member of the anti-apoptotic Bcl-2 protein family to regulate its stability. Within the endoplasmic reticulum, participates with USP33 in the rescue of post-translationally targeted membrane proteins that are inappropriately ubiquitinated by the cytosolic protein quality control in the cytosol. In Homo sapiens (Human), this protein is Ubiquitin carboxyl-terminal hydrolase 20 (USP20).